The sequence spans 142 residues: Large ribosomal subunit protein uL22c (142 aa).

This sequence belongs to the universal ribosomal protein uL22 family. In terms of assembly, part of the 50S ribosomal subunit.

Its subcellular location is the plastid. The protein resides in the chloroplast. Its function is as follows. This protein binds specifically to 23S rRNA. Functionally, the globular domain of the protein is located near the polypeptide exit tunnel on the outside of the subunit, while an extended beta-hairpin is found that lines the wall of the exit tunnel in the center of the 70S ribosome. In Pinus koraiensis (Korean pine), this protein is Large ribosomal subunit protein uL22c (rpl22).